Consider the following 264-residue polypeptide: Putative hydro-lyase Psyr_0498 (264 aa).

Belongs to the D-glutamate cyclase family.

This is Putative hydro-lyase Psyr_0498 from Pseudomonas syringae pv. syringae (strain B728a).